Reading from the N-terminus, the 113-residue chain is UPF0122 protein LAF_1235 (113 aa).

It belongs to the UPF0122 family.

Functionally, might take part in the signal recognition particle (SRP) pathway. This is inferred from the conservation of its genetic proximity to ftsY/ffh. May be a regulatory protein. The protein is UPF0122 protein LAF_1235 of Limosilactobacillus fermentum (strain NBRC 3956 / LMG 18251) (Lactobacillus fermentum).